The sequence spans 365 residues: Spermidine/putrescine import ATP-binding protein PotA (365 aa).

The ABC transporter domain occupies 9-239; that stretch reads IRLTNVTKSY…PINHFVANFI (231 aa). Position 41–48 (41–48) interacts with ATP; it reads GPSGCGKT.

The protein belongs to the ABC transporter superfamily. Spermidine/putrescine importer (TC 3.A.1.11.1) family. The complex is composed of two ATP-binding proteins (PotA), two transmembrane proteins (PotB and PotC) and a solute-binding protein (PotD).

The protein resides in the cell membrane. The enzyme catalyses ATP + H2O + polyamine-[polyamine-binding protein]Side 1 = ADP + phosphate + polyamineSide 2 + [polyamine-binding protein]Side 1.. Its function is as follows. Part of the ABC transporter complex PotABCD involved in spermidine/putrescine import. Responsible for energy coupling to the transport system. In Lactiplantibacillus plantarum (strain ATCC BAA-793 / NCIMB 8826 / WCFS1) (Lactobacillus plantarum), this protein is Spermidine/putrescine import ATP-binding protein PotA.